A 354-amino-acid chain; its full sequence is Selenide, water dikinase (354 aa).

Cys23 is a catalytic residue. ATP is bound by residues Lys26 and 54 to 56; that span reads TSD. Asp57 is a binding site for Mg(2+). ATP-binding positions include Asp74, Asp97, and 145–147; that span reads GHS. Asp97 contributes to the Mg(2+) binding site. Position 233 (Asp233) interacts with Mg(2+).

This sequence belongs to the selenophosphate synthase 1 family. Class I subfamily. As to quaternary structure, homodimer. It depends on Mg(2+) as a cofactor.

It carries out the reaction hydrogenselenide + ATP + H2O = selenophosphate + AMP + phosphate + 2 H(+). Its function is as follows. Synthesizes selenophosphate from selenide and ATP. This chain is Selenide, water dikinase, found in Burkholderia ambifaria (strain MC40-6).